The primary structure comprises 307 residues: DDRGK domain-containing protein 1 (307 aa).

Residues 1 to 2 are Lumenal-facing; sequence MD. A helical membrane pass occupies residues 3-23; the sequence is LILLVGIAVALLVILATLYFL. The Cytoplasmic portion of the chain corresponds to 24–307; the sequence is QNKNKAAGEA…PVQSAAGGDS (284 aa). Composition is skewed to low complexity over residues 32–43 and 54–83; these read EAKPAAAAPRRG and RRAQ…PAAA. The tract at residues 32–162 is disordered; that stretch reads EAKPAAAAPR…EEVEAEAERK (131 aa). Basic and acidic residues predominate over residues 117–162; the sequence is KMEAKEQKRLQREHELQEREKRKVKEAKEDAERKQQEEVEAEAERK.

Belongs to the DDRGK1 family. Interacts with Atg9; the interaction is transient.

The protein resides in the endoplasmic reticulum membrane. In terms of biological role, substrate adapter for ufmylation, the covalent attachment of the ubiquitin-like modifier UFM1 to substrate proteins. Required for ufmylation of Atg9; protects the nervous system during aging, possibly by stabilizing Atg9 and supporting its function. The chain is DDRGK domain-containing protein 1 from Drosophila willistoni (Fruit fly).